The following is a 152-amino-acid chain: Deoxyuridine 5'-triphosphate nucleotidohydrolase (152 aa).

Substrate contacts are provided by residues 71–73 (RSG), asparagine 84, and 88–90 (LID).

It belongs to the dUTPase family. It depends on Mg(2+) as a cofactor.

The enzyme catalyses dUTP + H2O = dUMP + diphosphate + H(+). The protein operates within pyrimidine metabolism; dUMP biosynthesis; dUMP from dCTP (dUTP route): step 2/2. In terms of biological role, this enzyme is involved in nucleotide metabolism: it produces dUMP, the immediate precursor of thymidine nucleotides and it decreases the intracellular concentration of dUTP so that uracil cannot be incorporated into DNA. The chain is Deoxyuridine 5'-triphosphate nucleotidohydrolase from Xanthomonas campestris pv. campestris (strain 8004).